The chain runs to 86 residues: Polcalcin Che a 3 (86 aa).

2 consecutive EF-hand domains span residues 8–43 and 43–78; these read QDIA…LGSV and VTPD…NRGL. Asp-21, Asn-23, Asp-25, Lys-27, Glu-32, Asp-56, Asp-58, Asp-60, and Glu-67 together coordinate Ca(2+).

In Chenopodium album (Fat hen), this protein is Polcalcin Che a 3.